Here is a 72-residue protein sequence, read N- to C-terminus: Translation initiation factor IF-1 1 (72 aa).

The 72-residue stretch at 1–72 folds into the S1-like domain; that stretch reads MSKDDVIQMQ…TRARIVFRSK (72 aa).

The protein belongs to the IF-1 family. Component of the 30S ribosomal translation pre-initiation complex which assembles on the 30S ribosome in the order IF-2 and IF-3, IF-1 and N-formylmethionyl-tRNA(fMet); mRNA recruitment can occur at any time during PIC assembly.

The protein localises to the cytoplasm. Its function is as follows. One of the essential components for the initiation of protein synthesis. Stabilizes the binding of IF-2 and IF-3 on the 30S subunit to which N-formylmethionyl-tRNA(fMet) subsequently binds. Helps modulate mRNA selection, yielding the 30S pre-initiation complex (PIC). Upon addition of the 50S ribosomal subunit IF-1, IF-2 and IF-3 are released leaving the mature 70S translation initiation complex. The chain is Translation initiation factor IF-1 1 from Bordetella avium (strain 197N).